Here is a 240-residue protein sequence, read N- to C-terminus: tRNA (guanine-N(1)-)-methyltransferase (240 aa).

Residues G110 and 130–135 (VGDYVL) contribute to the S-adenosyl-L-methionine site.

This sequence belongs to the RNA methyltransferase TrmD family. In terms of assembly, homodimer.

Its subcellular location is the cytoplasm. It carries out the reaction guanosine(37) in tRNA + S-adenosyl-L-methionine = N(1)-methylguanosine(37) in tRNA + S-adenosyl-L-homocysteine + H(+). Functionally, specifically methylates guanosine-37 in various tRNAs. This chain is tRNA (guanine-N(1)-)-methyltransferase, found in Borrelia recurrentis (strain A1).